The primary structure comprises 1072 residues: Integrin alpha-6 (1072 aa).

The signal sequence occupies residues 1–18 (MAAALLLYLPLLPGLAGA). At 19–1010 (FNLDAENVIG…FPAKPVALYT (992 aa)) the chain is on the extracellular side. 7 FG-GAP repeats span residues 23–88 (AENV…DTRC), 94–160 (DEDT…IKDD), 170–223 (DGRL…FYDL), 238–295 (RQDK…QRAL), 296–357 (SLEH…KWEG), 358–413 (IKPI…GINT), and 414–476 (EPAQ…VQPD). N-linked (GlcNAc...) asparagine glycosylation occurs at Asn-71. 3 disulfide bridges follow: Cys-79–Cys-88, Cys-125–Cys-148, and Cys-169–Cys-182. N-linked (GlcNAc...) asparagine glycans are attached at residues Asn-217 and Asn-278. Ca(2+) is bound by residues Asp-318, Asn-320, Asp-322, and Asp-326. Residue Asn-364 is glycosylated (N-linked (GlcNAc...) asparagine). 10 residues coordinate Ca(2+): Asp-380, Asn-382, Asp-384, Tyr-386, Asp-388, Asp-438, Asp-440, Asn-442, Tyr-444, and Asp-446. Cys-498 and Cys-557 are disulfide-bonded. N-linked (GlcNAc...) asparagine glycans are attached at residues Asn-515 and Asn-609. 2 disulfides stabilise this stretch: Cys-625/Cys-631 and Cys-725/Cys-736. Residues Asn-730, Asn-747, and Asn-780 are each glycosylated (N-linked (GlcNAc...) asparagine). 2 cysteine pairs are disulfide-bonded: Cys-880/Cys-927 and Cys-933/Cys-938. N-linked (GlcNAc...) asparagine glycosylation occurs at Asn-957. The chain crosses the membrane as a helical span at residues 1011-1036 (GVPWWIIAVAIFAGVLMLALLVFLLW). Residues 1037–1072 (KCGFFKRSKKDHYDATYHKAEIHAQPSDKERLTSDA) lie on the Cytoplasmic side of the membrane. The S-palmitoyl cysteine; by DHHC3 moiety is linked to residue Cys-1038. The GFFKR motif signature appears at 1039–1043 (GFFKR). The residue at position 1070 (Ser-1070) is a Phosphoserine; by CaMK2.

It belongs to the integrin alpha chain family. Heterodimer of an alpha and a beta subunit. The alpha subunit is composed of a heavy and a light chain linked by a disulfide bond. Alpha-6 associates with either beta-1 (ITGB1) or beta-4 (ITGB4) to form ITGA6:ITGB1 and ITGA6:ITGB4, respectively. In terms of processing, phosphorylated in vivo.

It localises to the cell membrane. Its function is as follows. Integrin alpha-6/beta-1 (ITGA6:ITGB1) is a receptor for laminin on platelets. Integrin alpha-6/beta-1 (ITGA6:ITGB1) is present in oocytes and is involved in sperm-egg fusion. Integrin alpha-6/beta-4 (ITGA6:ITGB4) is a receptor for laminin in epithelial cells and it plays a critical structural role in the hemidesmosome. The polypeptide is Integrin alpha-6 (ITGA6) (Gallus gallus (Chicken)).